Reading from the N-terminus, the 349-residue chain is Phosphate acetyltransferase (349 aa).

Belongs to the phosphate acetyltransferase and butyryltransferase family.

It is found in the cytoplasm. The enzyme catalyses acetyl-CoA + phosphate = acetyl phosphate + CoA. The protein operates within metabolic intermediate biosynthesis; acetyl-CoA biosynthesis; acetyl-CoA from acetate: step 2/2. This is Phosphate acetyltransferase (pta) from Rickettsia felis (strain ATCC VR-1525 / URRWXCal2) (Rickettsia azadi).